We begin with the raw amino-acid sequence, 601 residues long: Glutathione-regulated potassium-efflux system protein KefB (601 aa).

A run of 13 helical transmembrane segments spans residues 5-25 (DLLLAGVLFLFAAVVAVPLAA), 29-49 (IGAVLGYLLAGIAIGPWGLGF), 55-75 (EILHFSELGVVFLMFIIGLEL), 87-107 (IFGVGAAQVLFSAVILGGLLM), 115-135 (AAVIGGIGLAMSSTAMALQLM), 152-172 (VLLFQDLAVIPALALVPLLAG), 177-197 (HFDWMKVGMKVLAFVGMLIGG), 207-227 (FIAASGVREVFTAATLLLVLG), 230-250 (LFMDALGLSMALGTFIAGILL), 261-281 (IAIDPFKGLLLGLFFISVGMA), 284-304 (LGVLYTHLLWVVVSVAVLVAV), 326-346 (FAGVLSQGGEFAFVLFSTAAS), and 356-376 (ALLLVTVTLSMMTTPLLMKLI). Residues 400–518 (KPQVIVVGFG…QAGVTNFSRE (119 aa)) form the RCK N-terminal domain.

The protein belongs to the monovalent cation:proton antiporter 2 (CPA2) transporter (TC 2.A.37) family. KefB subfamily. As to quaternary structure, interacts with the regulatory subunit KefG.

The protein localises to the cell inner membrane. Its function is as follows. Pore-forming subunit of a potassium efflux system that confers protection against electrophiles. Catalyzes K(+)/H(+) antiport. The polypeptide is Glutathione-regulated potassium-efflux system protein KefB (Enterobacter sp. (strain 638)).